The chain runs to 114 residues: uncharacterized protein (114 aa).

The disordered stretch occupies residues 1 to 24 (MFGACYKQPLKPSGSEPPAEECRM).

In terms of tissue distribution, expressed in kidney and liver.

This is an uncharacterized protein from Homo sapiens (Human).